The sequence spans 495 residues: MLEHFCECYFDLSGLILCPVLGSIILLFIPNSSIRLIRLIGLCVSLITFLYSLVLWIQFDPSTAKFQFVESLRWLPYENIHLYMGIDGLSLFFVILTTFLIPICILVGWSGMRSFGKEYIIAFLICEFLMIAVFCMLDLLLFYVFFESVLIPMFIIIGVWGSRQRKIKAAYQFFLYTLLGSVFMLLAILLILLQTGTTDLQILLTTEFSERRQILLWIAFFASFAVKVPMVPVHIWLPEAHVEAPTAGSVILAGILLKLGTYGFLRFSIPMFPEATLCFTPFIYTLSAIAIIYTSLTTLRQIDLKKIIAYSSVAHMNLVTIGMFSLNIQGIGGSILLMLSHGLVSSALFLCVGVLYDRHKTRLVRYYGGLVSTMPNFSTIFFFFTLANMSLPGTSSFIGEFLILVGAFQRNSLVATLRALGMILGAAYSLWLYNRVVSGNLKPDFLYKFSDLNGREVFIFLPFLVGVVWMGVYPKVFLDCMHTSVSNLVQHGKFH.

The next 15 membrane-spanning stretches (helical) occupy residues Tyr9–Ile29, Leu39–Phe59, Leu89–Trp109, Glu118–Asp138, Leu139–Val159, Phe173–Leu193, Ile214–His234, Pro245–Leu265, Phe272–Ile292, Val313–Gly333, Ile335–Leu355, Tyr367–Ala387, Asn388–Phe408, Leu413–Tyr433, and Val457–Phe477.

This sequence belongs to the complex I subunit 4 family.

The protein resides in the mitochondrion membrane. The enzyme catalyses a ubiquinone + NADH + 5 H(+)(in) = a ubiquinol + NAD(+) + 4 H(+)(out). Its function is as follows. Core subunit of the mitochondrial membrane respiratory chain NADH dehydrogenase (Complex I) that is believed to belong to the minimal assembly required for catalysis. Complex I functions in the transfer of electrons from NADH to the respiratory chain. The immediate electron acceptor for the enzyme is believed to be ubiquinone. This is NADH-ubiquinone oxidoreductase chain 4 (ND4) from Triticum aestivum (Wheat).